A 319-amino-acid polypeptide reads, in one-letter code: ATP-dependent 6-phosphofructokinase (319 aa).

Gly11 is a binding site for ATP. 21-25 (RSIAR) lines the ADP pocket. ATP is bound by residues 72–73 (RC) and 102–105 (GDGS). Asp103 provides a ligand contact to Mg(2+). 125-127 (TID) lines the substrate pocket. Asp127 (proton acceptor) is an active-site residue. Arg154 is a binding site for ADP. Substrate-binding positions include Arg162 and 169-171 (MGR). ADP-binding positions include 185 to 187 (GAE), Arg211, and 213 to 215 (KLH). Substrate-binding positions include Glu222, Lys243, and 249 to 252 (HVQR).

Belongs to the phosphofructokinase type A (PFKA) family. ATP-dependent PFK group I subfamily. Prokaryotic clade 'B1' sub-subfamily. In terms of assembly, homotetramer. It depends on Mg(2+) as a cofactor.

The protein resides in the cytoplasm. It catalyses the reaction beta-D-fructose 6-phosphate + ATP = beta-D-fructose 1,6-bisphosphate + ADP + H(+). It participates in carbohydrate degradation; glycolysis; D-glyceraldehyde 3-phosphate and glycerone phosphate from D-glucose: step 3/4. Allosterically activated by ADP and other diphosphonucleosides, and allosterically inhibited by phosphoenolpyruvate. Functionally, catalyzes the phosphorylation of D-fructose 6-phosphate to fructose 1,6-bisphosphate by ATP, the first committing step of glycolysis. This is ATP-dependent 6-phosphofructokinase from Finegoldia magna (strain ATCC 29328 / DSM 20472 / WAL 2508) (Peptostreptococcus magnus).